The following is a 104-amino-acid chain: Large ribosomal subunit protein bL21 (104 aa).

Belongs to the bacterial ribosomal protein bL21 family. As to quaternary structure, part of the 50S ribosomal subunit. Contacts protein L20.

Its function is as follows. This protein binds to 23S rRNA in the presence of protein L20. The protein is Large ribosomal subunit protein bL21 of Caldanaerobacter subterraneus subsp. tengcongensis (strain DSM 15242 / JCM 11007 / NBRC 100824 / MB4) (Thermoanaerobacter tengcongensis).